The primary structure comprises 31 residues: Cytochrome b6-f complex subunit 6 (31 aa).

Residues 4–24 (LTSYFGFLLAALTITFVLFIG) form a helical membrane-spanning segment.

This sequence belongs to the PetL family. The 4 large subunits of the cytochrome b6-f complex are cytochrome b6, subunit IV (17 kDa polypeptide, PetD), cytochrome f and the Rieske protein, while the 4 small subunits are PetG, PetL, PetM and PetN. The complex functions as a dimer.

It is found in the plastid. The protein localises to the chloroplast thylakoid membrane. In terms of biological role, component of the cytochrome b6-f complex, which mediates electron transfer between photosystem II (PSII) and photosystem I (PSI), cyclic electron flow around PSI, and state transitions. PetL is important for photoautotrophic growth as well as for electron transfer efficiency and stability of the cytochrome b6-f complex. The protein is Cytochrome b6-f complex subunit 6 of Oxybasis rubra (Red goosefoot).